A 419-amino-acid chain; its full sequence is 20-hydroxy-prefusarin hydrolase FUS2 (419 aa).

The active site involves Ser238.

Belongs to the AB hydrolase superfamily. FUS2 hydrolase family.

It participates in mycotoxin biosynthesis. 20-hydroxy-prefusarin hydrolase; part of the gene cluster that mediates the biosynthesis of the mycotoxin fusarin C. Within the cluster, FUS1, FUS2, FUS8 and FUS9 are sufficient for fusarin production. The roles of the other FUS members are yet undetermined. The fusarin C synthetase FUS1 is responsible for the condensation of one acetyl-coenzyme A (CoA) unit with six malonyl-CoA units and the amide linkage of the arising heptaketide and homoserine, subsequently releasing the first intermediate, prefusarin, as an alcohol with an open ring structure. The cytochrome P450 monooxygenase FUS8 participates in multiple oxidation processes at carbon C-20 and is able to use the FUS1 product as substrate, resulting in formation of 20-hydroxy-prefusarin. This reaction seems to be essential before the 2-pyrrolidone ring closure can be catalyzed by FUS2, generating 20-hydroxy-fusarin. FUS8 is able to further oxidizes carbon C-20 after ring closure, resulting in the formation of carboxy-fusarin C. As the last step, FUS9 methylates the hydroxyl group at C-21 to generate fusarin C. Fusarin C can then rearrange to epi-fusarin C, the (z)-isomers, and fusarin A and fusarin D. This Gibberella moniliformis (strain M3125 / FGSC 7600) (Maize ear and stalk rot fungus) protein is 20-hydroxy-prefusarin hydrolase FUS2.